Consider the following 244-residue polypeptide: Rho-related GTP-binding protein RhoE (244 aa).

Position 30-37 (30-37) interacts with GTP; that stretch reads GDSQCGKT. The Effector region motif lies at 52–60; it reads YVPTVFENY. Residues 77 to 81 and 135 to 138 contribute to the GTP site; these read DTSGS and CKSD. Cys-241 bears the Cysteine methyl ester mark. Cys-241 carries S-farnesyl cysteine lipidation. Residues 242–244 constitute a propeptide, removed in mature form; the sequence is TVM.

The protein belongs to the small GTPase superfamily. Rho family. In terms of assembly, binds ROCK1. Interacts with UBXD5. Ubiquitous.

It is found in the golgi apparatus membrane. Binds GTP but lacks intrinsic GTPase activity and is resistant to Rho-specific GTPase-activating proteins. The protein is Rho-related GTP-binding protein RhoE (RND3) of Homo sapiens (Human).